Here is a 143-residue protein sequence, read N- to C-terminus: Small ribosomal subunit protein uS11c (143 aa).

This sequence belongs to the universal ribosomal protein uS11 family. As to quaternary structure, part of the 30S ribosomal subunit.

It localises to the plastid. The protein localises to the chloroplast. This is Small ribosomal subunit protein uS11c from Hordeum vulgare (Barley).